A 207-amino-acid chain; its full sequence is DNA-directed RNA polymerase subunit alpha (207 aa).

This sequence belongs to the RNA polymerase alpha chain family. In plastids the minimal PEP RNA polymerase catalytic core is composed of four subunits: alpha, beta, beta', and beta''. When a (nuclear-encoded) sigma factor is associated with the core the holoenzyme is formed, which can initiate transcription.

Its subcellular location is the plastid. The protein localises to the chloroplast. The enzyme catalyses RNA(n) + a ribonucleoside 5'-triphosphate = RNA(n+1) + diphosphate. Its function is as follows. DNA-dependent RNA polymerase catalyzes the transcription of DNA into RNA using the four ribonucleoside triphosphates as substrates. This chain is DNA-directed RNA polymerase subunit alpha (rpoA), found in Euglena myxocylindracea.